Consider the following 224-residue polypeptide: PKHD-type hydroxylase SO_3913 (224 aa).

Positions 78–176 constitute a Fe2OG dioxygenase domain; the sequence is QFYPPLFNRY…RTSAFMWLQS (99 aa). Fe cation contacts are provided by H96, D98, and H157. R167 provides a ligand contact to 2-oxoglutarate.

The cofactor is Fe(2+). It depends on L-ascorbate as a cofactor.

The sequence is that of PKHD-type hydroxylase SO_3913 from Shewanella oneidensis (strain ATCC 700550 / JCM 31522 / CIP 106686 / LMG 19005 / NCIMB 14063 / MR-1).